The following is a 725-amino-acid chain: MVMKASVDDDDSGWELSMPEKMEKSNTNWVDITQDFEEACRELKLGELLHDKLFGLFEAMSAIEMMDPKMDAGMIGNQVNRKVLNFEQAIKDGTIKIKDLTLPELIGIMDTCFCCLITWLEGHSLAQTVFTCLYIHNPDFIEDPAMKAFALGILKICDIAREKVNKAAVFEEEDFQSMTYGFKMANSVTDLRVTGMLKDVEDDMQRRVKSTRSRQGEERDPEVELEHQQCLAVFSRVKFTRVLLTVLIAFTKKETSAVAEAQKLMVQAADLLSAIHNSLHHGIQAQNDTTKGDHPIMMGFEPLVNQRLLPPTFPRYAKIIKREEMVSYFARLIDRIKTVCEVVNLTNLHCILDFFCEFSEQSPCVLSRSLLQTTFLVDNKKVFGTHLMQDMVKDALRSFVSPPVLSPKCYLYNNHQAKDCIDSFVTHCVRPFCSLIQIHGHNRARQRDKLGHILEEFATLQDEAEKVDAALHTMLLKQEPQRQHLACLGTWVLYHNLRIMIQYLLSGFELELYSMHEYYYIYWYLSEFLYAWLMSTLSRADGSQMAEERIMEEQQKGRSSKKTKKKKKVRPLSREITMSQAYQNMCAGMFKTMVAFDMDGKVRKPKFELDSEQVRYEHRFAPFNSVMTPPPVHYLQFKEMSDLNKYSPPPQSPELYVAASKHFQQAKMILENIPNPDHEVNRILKVAKPNFVVMKLLAGGHKKESKVPPEFDFSAHKYFPVVKLV.

Serine 187 bears the Phosphoserine mark. The disordered stretch occupies residues 548–573; the sequence is ERIMEEQQKGRSSKKTKKKKKVRPLS. A compositionally biased stretch (basic residues) spans 558-571; the sequence is RSSKKTKKKKKVRP.

It belongs to the MAK10 family. Component of the N-terminal acetyltransferase C (NatC) complex, which is composed of NAA35, NAA38 and NAA30.

It localises to the cytoplasm. Auxillary component of the N-terminal acetyltransferase C (NatC) complex which catalyzes acetylation of N-terminal methionine residues. N-terminal acetylation protects proteins from ubiquitination and degradation by the N-end rule pathway. Involved in regulation of apoptosis and proliferation of smooth muscle cells. The chain is N-alpha-acetyltransferase 35, NatC auxiliary subunit (NAA35) from Macaca fascicularis (Crab-eating macaque).